The sequence spans 109 residues: MLDKTLRMNYLFDFYQSLLTEKQRKYMSLYYLDDFSLGEIAEEFDVSRQAVYDNIKRTEAMLEEYEEKLSLLAKFEKRSEILQQLKEAVDKQATSEELMALLESLDTLE.

The protein belongs to the UPF0122 family.

Might take part in the signal recognition particle (SRP) pathway. This is inferred from the conservation of its genetic proximity to ftsY/ffh. May be a regulatory protein. This chain is UPF0122 protein BH2485, found in Halalkalibacterium halodurans (strain ATCC BAA-125 / DSM 18197 / FERM 7344 / JCM 9153 / C-125) (Bacillus halodurans).